A 436-amino-acid chain; its full sequence is GTPase Der (436 aa).

EngA-type G domains lie at 4-167 (PVVA…KNIP) and 176-351 (VQFC…ENHS). GTP contacts are provided by residues 10–17 (GRPNVGKS), 57–61 (DTGGI), 119–122 (NKLD), 182–189 (GRPNVGKS), 229–233 (DTAGM), and 294–297 (NKWD). One can recognise a KH-like domain in the interval 352–436 (LRVQTNVLND…PIKIFARARK (85 aa)).

This sequence belongs to the TRAFAC class TrmE-Era-EngA-EngB-Septin-like GTPase superfamily. EngA (Der) GTPase family. In terms of assembly, associates with the 50S ribosomal subunit.

In terms of biological role, GTPase that plays an essential role in the late steps of ribosome biogenesis. In Bacillus velezensis (strain DSM 23117 / BGSC 10A6 / LMG 26770 / FZB42) (Bacillus amyloliquefaciens subsp. plantarum), this protein is GTPase Der.